Here is a 544-residue protein sequence, read N- to C-terminus: MAAKDVQFGNEVRQKMVNGVNILANAVRVTLGPKGRNVVLDRAFGGPHITKDGVSVAKEIELKDKFENMGAQMVKEVASKTNDVAGDGTTTATVLAQSIVAEGMKYVTAGMNPTDLKRGIDKAVAALVDELKNIAKPCDTSKEIAQVGSISANSDEQVGAIIAEAMEKVGKEGVITVEDGKSLENELDVVEGMQFDRGYLSPYFINDAEKQIAGLDNPFVLLFDKKISNIRDLLPVLEQVAKASRPLLIIAEDVEGEALATLVVNNIRGILKTVAVKAPGFGDRRKAMLQDIAILTGGVVISEEVGLSLEKATLDDLGQAKRIEIGKENTTIIDGFGDAAQIEARVAEIRQQIETATSDYGKEKLQERVAKLAGGVAVIKVGAATEVEMKEKKDRVEDALHATRAAVEEGVVAGGGVALLRARAALENLHTGNADQEAGVQIVLRAVESPLRQIVAKAGGEPSVVVNKVLEGKGNYGYKAGSGEYGDMIEMGVLDPAKVTRSALQHAASIAGLMLTTDCMIAEIPERKPAMPDMGGMGGMGGMM.

ATP-binding positions include Thr30–Pro33, Lys51, Asp87–Thr91, Gly415, and Asp495.

This sequence belongs to the chaperonin (HSP60) family. Forms a cylinder of 14 subunits composed of two heptameric rings stacked back-to-back. Interacts with the co-chaperonin GroES.

It localises to the cytoplasm. The catalysed reaction is ATP + H2O + a folded polypeptide = ADP + phosphate + an unfolded polypeptide.. Together with its co-chaperonin GroES, plays an essential role in assisting protein folding. The GroEL-GroES system forms a nano-cage that allows encapsulation of the non-native substrate proteins and provides a physical environment optimized to promote and accelerate protein folding. This is Chaperonin GroEL from Neisseria flavescens.